A 195-amino-acid polypeptide reads, in one-letter code: Neurturin (195 aa).

The N-terminal stretch at 1-19 (MRRWKAAALVSLICSSLLS) is a signal peptide. A propeptide spanning residues 20-95 (VWMCQEGLLL…RAGPRRRRAR (76 aa)) is cleaved from the precursor. Intrachain disulfides connect C101–C163, C128–C192, and C132–C194. R147, R156, and R158 together coordinate heparan sulfate group.

This sequence belongs to the TGF-beta family. GDNF subfamily. Homodimer; disulfide-linked. Interacts with GFRA2 coreceptor and RET: forms a 2:2:2 ternary complex composed of NRTN ligand, GFRA2 and RET receptor. Also forms a 4:4:4 tetrameric complex composed of 4 copies of NRTN ligand, GFRA2 and RET receptor, which prevents endocytosis of RET. In terms of tissue distribution, widespread distribution.

Its subcellular location is the secreted. Functionally, growth factor that supports the survival of sympathetic neurons in culture. May regulate the development and maintenance of the CNS. Involved in the development of the neural crest. Might control the size of non-neuronal cell population such as haemopoietic cells. Acts by binding to its coreceptor, GFRA2, leading to autophosphorylation and activation of the RET receptor. Heparan sulfate-binding is required for signaling. The chain is Neurturin (Nrtn) from Mus musculus (Mouse).